Here is a 1035-residue protein sequence, read N- to C-terminus: Putative protein FAM47C (1035 aa).

Disordered regions lie at residues 1 to 21 (MGDQ…TPWY) and 159 to 797 (LEDA…RRVS). Residues 159–173 (LEDAGSCEGQEKTTD) are compositionally biased toward basic and acidic residues. The segment covering 380–392 (PEPPKTRVPPLRP) has biased composition (pro residues). Over residues 478–490 (PPEKDVSHLRPEP) the composition is skewed to basic and acidic residues. Residues 533–544 (SLHQAPPESSVS) show a composition bias toward polar residues. 3 stretches are compositionally biased toward basic and acidic residues: residues 611–622 (PETRVSHLRPEP), 683–694 (PETRVSHLRPEP), and 753–766 (EPLE…RPEP).

The protein belongs to the FAM47 family.

The polypeptide is Putative protein FAM47C (FAM47C) (Homo sapiens (Human)).